A 54-amino-acid chain; its full sequence is MAVPKKRTSISKKRIRRNIWKKRGYWEAKRAFSLAKSISSGRSKSFFVLQKNKQ.

Belongs to the bacterial ribosomal protein bL32 family.

Its subcellular location is the plastid. The protein resides in the chloroplast. The chain is Large ribosomal subunit protein bL32c from Piper cenocladum (Ant piper).